Here is a 130-residue protein sequence, read N- to C-terminus: Large ribosomal subunit protein bL12 (130 aa).

Residues 94-114 (MTEGLPKTVKEKTSKSDAEDT) are disordered.

The protein belongs to the bacterial ribosomal protein bL12 family. In terms of assembly, homodimer. Part of the ribosomal stalk of the 50S ribosomal subunit. Forms a multimeric L10(L12)X complex, where L10 forms an elongated spine to which 2 to 4 L12 dimers bind in a sequential fashion. Binds GTP-bound translation factors.

In terms of biological role, forms part of the ribosomal stalk which helps the ribosome interact with GTP-bound translation factors. Is thus essential for accurate translation. The sequence is that of Large ribosomal subunit protein bL12 from Chlamydia caviae (strain ATCC VR-813 / DSM 19441 / 03DC25 / GPIC) (Chlamydophila caviae).